Consider the following 155-residue polypeptide: Nascent polypeptide-associated complex subunit beta (155 aa).

Disordered regions lie at residues 1–35 (MDQA…SGAD) and 116–155 (LAES…SNVE). Residues 20 to 30 (TPRRKVKKVHK) show a composition bias toward basic residues. In terms of domain architecture, NAC-A/B spans 33 to 98 (GADDKKLQAT…GEEKELTELV (66 aa)). Over residues 136–155 (DEEDDIPDLVEGENFESNVE) the composition is skewed to acidic residues.

It belongs to the NAC-beta family. As to quaternary structure, part of the nascent polypeptide-associated complex (NAC), consisting of egd2 and egd1. NAC associates with ribosomes via egd1.

Its subcellular location is the cytoplasm. It is found in the nucleus. Component of the nascent polypeptide-associated complex (NAC), a dynamic component of the ribosomal exit tunnel, protecting the emerging polypeptides from interaction with other cytoplasmic proteins to ensure appropriate nascent protein targeting. The NAC complex also promotes mitochondrial protein import by enhancing productive ribosome interactions with the outer mitochondrial membrane and blocks the inappropriate interaction of ribosomes translating non-secretory nascent polypeptides with translocation sites in the membrane of the endoplasmic reticulum. EGD1 may act as a transcription factor that exert a negative effect on the expression of several genes that are transcribed by RNA polymerase II. This is Nascent polypeptide-associated complex subunit beta (egd1) from Aspergillus niger (strain ATCC MYA-4892 / CBS 513.88 / FGSC A1513).